Reading from the N-terminus, the 263-residue chain is Glycerol uptake facilitator protein (263 aa).

At 1 to 7 the chain is on the cytoplasmic side; it reads MNIYRKK. Residues 8–36 form a helical membrane-spanning segment; it reads NIIKKCFMEFFGTGLVMFFGIGCLAASKL. Residues 37 to 41 are Extracellular-facing; that stretch reads TNANF. Residues 42 to 62 form a helical membrane-spanning segment; the sequence is TQFEISCIWGFGVSIAIYFSS. Topologically, residues 63 to 65 are cytoplasmic; it reads SIS. Residues 66 to 69 lie within the membrane without spanning it; sequence GAHL. The NPA 1 signature appears at 70–72; the sequence is NPA. The helical intramembrane region spans 70–80; it reads NPAVTIFFWLS. At 81–86 the chain is on the cytoplasmic side; that stretch reads SKLNKR. A helical membrane pass occupies residues 87 to 110; sequence KVLPYIISQTLGSFFFTMLTYYLY. Residues 111–145 are Extracellular-facing; the sequence is NNLLISFERNNNVVRGTQESLNLASIFCVYPNYNN. Residues 146–171 form a helical membrane-spanning segment; it reads SFIYDFIIEIFSTALFILIVLEFNNR. At 172 to 181 the chain is on the cytoplasmic side; the sequence is NSNYFLYNRS. The chain crosses the membrane as a helical span at residues 182–198; sequence VAPILTGFLVCMINLVI. Residues 199 to 202 are Extracellular-facing; it reads NPLN. Residues 203-206 lie within the membrane without spanning it; sequence NISL. Residues 207–209 carry the NPA 2 motif; it reads NPA. An intramembrane region (helical) is located at residues 207–220; the sequence is NPARDLGPKILLSL. Residues 221–236 lie on the Extracellular side of the membrane; that stretch reads TGWGLFSFTGGNDNIL. Residues 237-259 traverse the membrane as a helical segment; the sequence is YCFIPIMGPILGANLGGWIHKTL. Residues 260 to 263 lie on the Cytoplasmic side of the membrane; that stretch reads INNS.

The protein belongs to the MIP/aquaporin (TC 1.A.8) family.

It localises to the cell membrane. The enzyme catalyses glycerol(in) = glycerol(out). Its function is as follows. Mediates glycerol diffusion across the cytoplasmic membrane via a pore-type mechanism. This chain is Glycerol uptake facilitator protein (glpF), found in Buchnera aphidicola subsp. Acyrthosiphon pisum (strain APS) (Acyrthosiphon pisum symbiotic bacterium).